A 167-amino-acid chain; its full sequence is Epithelial membrane protein 2 (167 aa).

The chain crosses the membrane as a helical span at residues 1–21; the sequence is MLVLLAFIIAFHITSAALLFI. N44, N47, and N52 each carry an N-linked (GlcNAc...) asparagine glycan. The next 3 membrane-spanning stretches (helical) occupy residues 67–87, 95–115, and 143–163; these read TMIL…LQLF, FVLT…AASI, and YILA…YLIL.

Belongs to the PMP-22/EMP/MP20 family. As to quaternary structure, interacts with PTK2; regulates PTK2 activation and localization. Interacts with ITGB3; regulates the levels of the heterodimer ITGA5-ITGB3 integrin surface expression. Interacts with P2RX7 (via C-terminus). Interacts with ITGB1; the interaction may be direct or indirect and ITGB1 has a heterodimer form.

The protein localises to the golgi apparatus membrane. Its subcellular location is the cell membrane. The protein resides in the apical cell membrane. It is found in the membrane raft. It localises to the cytoplasm. The protein localises to the nucleus. Its subcellular location is the perinuclear region. In terms of biological role, functions as a key regulator of cell membrane composition by regulating protein surface expression. Also, plays a role in regulation of processes including cell migration, cell proliferation, cell contraction and cell adhesion. Regulates transepithelial migration of neutrophils into the alveolar lumen, potentially via mediation of cell surface expression of adhesion markers and lipid raft formation. Negatively regulates caveolae formation by reducing CAV1 expression and CAV1 amount by increasing lysosomal degradation. Facilitates surface trafficking and the formation of lipid rafts bearing GPI-anchor proteins. Regulates surface expression of MHC1 and ICAM1 proteins increasing susceptibility to T-cell mediated cytotoxicity. Regulates the plasma membrane expression of the integrin heterodimers ITGA6-ITGB1, ITGA5-ITGB3 and ITGA5-ITGB1 resulting in modulation of cell-matrix adhesion. Also regulates many processes through PTK2. Regulates blood vessel endothelial cell migration and angiogenesis by regulating VEGF protein expression through PTK2 activation. Regulates cell migration and cell contraction through PTK2 and SRC activation. Regulates focal adhesion density, F-actin conformation and cell adhesion capacity through interaction with PTK2. Positively regulates cell proliferation. Plays a role during cell death and cell blebbing. Promotes angiogenesis and vasculogenesis through induction of VEGFA via a HIF1A-dependent pathway. Also plays a role in embryo implantation by regulating surface trafficking of integrin heterodimer ITGA5-ITGB3. Plays a role in placental angiogenesis and uterine natural killer cell regulation at the maternal-fetal placental interface, however not required in the maternal tissues for a viable pregnancy. Involved in the early stages of embryogenic development and cardiogenesis, potentially via regulation of epithelial-mesenchymal transition timing. May play a role in glomerular filtration. This is Epithelial membrane protein 2 (EMP2) from Pan troglodytes (Chimpanzee).